An 826-amino-acid polypeptide reads, in one-letter code: Lon protease (826 aa).

The span at 1-20 (MSEEELNNRDTESKQEHDEN) shows a compositional bias: basic and acidic residues. The segment at 1–27 (MSEEELNNRDTESKQEHDENNSNFEAG) is disordered. In terms of domain architecture, Lon N-terminal spans 33-231 (LPVLPLREVI…KVHALLEKEL (199 aa)). 384–391 (GPPGVGKT) serves as a coordination point for ATP. The 182-residue stretch at 620-801 (ENLVGMTTGL…SEALTFTLAE (182 aa)) folds into the Lon proteolytic domain. Catalysis depends on residues Ser-707 and Lys-750.

The protein belongs to the peptidase S16 family. As to quaternary structure, homohexamer. Organized in a ring with a central cavity.

It localises to the cytoplasm. The catalysed reaction is Hydrolysis of proteins in presence of ATP.. Its function is as follows. ATP-dependent serine protease that mediates the selective degradation of mutant and abnormal proteins as well as certain short-lived regulatory proteins. Required for cellular homeostasis and for survival from DNA damage and developmental changes induced by stress. Degrades polypeptides processively to yield small peptide fragments that are 5 to 10 amino acids long. Binds to DNA in a double-stranded, site-specific manner. The sequence is that of Lon protease from Neorickettsia sennetsu (strain ATCC VR-367 / Miyayama) (Ehrlichia sennetsu).